The primary structure comprises 444 residues: Tubulin beta-7 chain (444 aa).

The GTP site is built by Gln-11, Glu-69, Ser-138, Gly-142, Thr-143, Gly-144, Asn-204, and Asn-226. Mg(2+) is bound at residue Glu-69.

This sequence belongs to the tubulin family. In terms of assembly, dimer of alpha and beta chains. A typical microtubule is a hollow water-filled tube with an outer diameter of 25 nm and an inner diameter of 15 nM. Alpha-beta heterodimers associate head-to-tail to form protofilaments running lengthwise along the microtubule wall with the beta-tubulin subunit facing the microtubule plus end conferring a structural polarity. Microtubules usually have 13 protofilaments but different protofilament numbers can be found in some organisms and specialized cells. It depends on Mg(2+) as a cofactor.

It is found in the cytoplasm. It localises to the cytoskeleton. Functionally, tubulin is the major constituent of microtubules, a cylinder consisting of laterally associated linear protofilaments composed of alpha- and beta-tubulin heterodimers. Microtubules grow by the addition of GTP-tubulin dimers to the microtubule end, where a stabilizing cap forms. Below the cap, tubulin dimers are in GDP-bound state, owing to GTPase activity of alpha-tubulin. The chain is Tubulin beta-7 chain from Gossypium hirsutum (Upland cotton).